The following is a 100-amino-acid chain: NADH-quinone oxidoreductase subunit K 2 (100 aa).

The next 3 membrane-spanning stretches (helical) occupy residues 4–24 (LWWS…GVLL), 28–48 (ILIV…NFIA), and 60–80 (IFAI…LGIL).

It belongs to the complex I subunit 4L family. NDH-1 is composed of 14 different subunits. Subunits NuoA, H, J, K, L, M, N constitute the membrane sector of the complex.

The protein localises to the cell inner membrane. The enzyme catalyses a quinone + NADH + 5 H(+)(in) = a quinol + NAD(+) + 4 H(+)(out). NDH-1 shuttles electrons from NADH, via FMN and iron-sulfur (Fe-S) centers, to quinones in the respiratory chain. The immediate electron acceptor for the enzyme in this species is believed to be ubiquinone. Couples the redox reaction to proton translocation (for every two electrons transferred, four hydrogen ions are translocated across the cytoplasmic membrane), and thus conserves the redox energy in a proton gradient. The sequence is that of NADH-quinone oxidoreductase subunit K 2 from Rhizobium meliloti (strain 1021) (Ensifer meliloti).